The primary structure comprises 357 residues: MKIFQNTKNVIVSIAWAAALCTSAVSAQTLTSNSTGTNNGFYYTFWKDSGDASMTLLSGGRYQSSWNSSTNNWVGGKGWNPGSSSRVISYSGYYGVDSSQNSYLALYGWTRSPLIEYYVIESYGSYNPASCSGGTDYGSFQSDGATYNVRRCQRVNQPSIDGNQTFYQYFSVRNPKKGFGNISGTITFANHANFWATKGLNLGNHNYQVLATEGYQSRGSSDITVSQGGSSGGGNSSSSSSASGGGSKIIVVRARGTAGGESITLRVGNTNVATWTLTTTMTNYTATTSASGGSLVQYTNDSGNRDVQVDYISVNGSIRQSEDQTYNTGVYQNGSCGGGNGRSEWLHCNGAIGYGDI.

Positions 1–27 are cleaved as a signal peptide; sequence MKIFQNTKNVIVSIAWAAALCTSAVSA. In terms of domain architecture, GH11 spans 29-226; that stretch reads TLTSNSTGTN…SRGSSDITVS (198 aa). The active-site Nucleophile is Glu-116. The active-site Proton donor is the Glu-213. The segment at 220–245 is disordered; that stretch reads SSDITVSQGGSSGGGNSSSSSSASGG.

It belongs to the glycosyl hydrolase 11 (cellulase G) family.

It is found in the secreted. It catalyses the reaction Endohydrolysis of (1-&gt;4)-beta-D-xylosidic linkages in xylans.. It functions in the pathway glycan degradation; xylan degradation. Functionally, endo-acting xylanase which specifically cleaves internal linkages on the xylan backbone, releasing xylooligosaccharides. Is able to hydrolyze glucuronoxylan and the arabinoxylan from wheat. This chain is Endo-1,4-beta-xylanase Xyn11B (xyn11B), found in Cellvibrio japonicus (Pseudomonas fluorescens subsp. cellulosa).